Reading from the N-terminus, the 194-residue chain is ATP-dependent Clp protease proteolytic subunit (194 aa).

The active-site Nucleophile is the S98. The active site involves H123.

Belongs to the peptidase S14 family. Fourteen ClpP subunits assemble into 2 heptameric rings which stack back to back to give a disk-like structure with a central cavity, resembling the structure of eukaryotic proteasomes.

It localises to the cytoplasm. It catalyses the reaction Hydrolysis of proteins to small peptides in the presence of ATP and magnesium. alpha-casein is the usual test substrate. In the absence of ATP, only oligopeptides shorter than five residues are hydrolyzed (such as succinyl-Leu-Tyr-|-NHMec, and Leu-Tyr-Leu-|-Tyr-Trp, in which cleavage of the -Tyr-|-Leu- and -Tyr-|-Trp bonds also occurs).. Functionally, cleaves peptides in various proteins in a process that requires ATP hydrolysis. Has a chymotrypsin-like activity. Plays a major role in the degradation of misfolded proteins. The protein is ATP-dependent Clp protease proteolytic subunit of Staphylococcus saprophyticus subsp. saprophyticus (strain ATCC 15305 / DSM 20229 / NCIMB 8711 / NCTC 7292 / S-41).